Consider the following 349-residue polypeptide: Polyamine aminopropyltransferase 2 (349 aa).

Residues 29–267 form the PABS domain; that stretch reads DGAITAIEDS…SSWGFLLASD (239 aa). Gln60 provides a ligand contact to S-methyl-5'-thioadenosine. Residues His91 and Glu115 each coordinate spermidine. S-methyl-5'-thioadenosine is bound by residues Asp135 and 167–168; that span reads DG. The Proton acceptor role is filled by Asp185. Position 194 (Pro194) interacts with S-methyl-5'-thioadenosine.

Belongs to the spermidine/spermine synthase family. Homodimer or homotetramer.

It is found in the cytoplasm. It catalyses the reaction S-adenosyl 3-(methylsulfanyl)propylamine + putrescine = S-methyl-5'-thioadenosine + spermidine + H(+). It participates in amine and polyamine biosynthesis; spermidine biosynthesis; spermidine from putrescine: step 1/1. In terms of biological role, catalyzes the irreversible transfer of a propylamine group from the amino donor S-adenosylmethioninamine (decarboxy-AdoMet) to putrescine (1,4-diaminobutane) to yield spermidine. The polypeptide is Polyamine aminopropyltransferase 2 (Pseudomonas aeruginosa (strain ATCC 15692 / DSM 22644 / CIP 104116 / JCM 14847 / LMG 12228 / 1C / PRS 101 / PAO1)).